The chain runs to 308 residues: Cytochrome b (308 aa).

4 consecutive transmembrane segments (helical) span residues 1-21, 45-66, 81-101, and 146-166; these read FGSL…LLAT, WLIR…YIHI, WNVG…GYVL, and FFAL…VHLT. Heme b-binding residues include histidine 51 and histidine 65. Histidine 150 and histidine 164 together coordinate heme b. Histidine 169 provides a ligand contact to a ubiquinone. 3 helical membrane-spanning segments follow: residues 194–214, 256–276, and 288–308; these read MKDI…ALFS, LGGV…PLLH, and LSQI…WVGS.

The protein belongs to the cytochrome b family. As to quaternary structure, the cytochrome bc1 complex contains 11 subunits: 3 respiratory subunits (MT-CYB, CYC1 and UQCRFS1), 2 core proteins (UQCRC1 and UQCRC2) and 6 low-molecular weight proteins (UQCRH/QCR6, UQCRB/QCR7, UQCRQ/QCR8, UQCR10/QCR9, UQCR11/QCR10 and a cleavage product of UQCRFS1). This cytochrome bc1 complex then forms a dimer. Heme b is required as a cofactor.

The protein resides in the mitochondrion inner membrane. Its function is as follows. Component of the ubiquinol-cytochrome c reductase complex (complex III or cytochrome b-c1 complex) that is part of the mitochondrial respiratory chain. The b-c1 complex mediates electron transfer from ubiquinol to cytochrome c. Contributes to the generation of a proton gradient across the mitochondrial membrane that is then used for ATP synthesis. The protein is Cytochrome b (MT-CYB) of Ptiloprora plumbea (Leaden honeyeater).